The chain runs to 341 residues: S-adenosylmethionine:tRNA ribosyltransferase-isomerase (341 aa).

It belongs to the QueA family. Monomer.

Its subcellular location is the cytoplasm. The catalysed reaction is 7-aminomethyl-7-carbaguanosine(34) in tRNA + S-adenosyl-L-methionine = epoxyqueuosine(34) in tRNA + adenine + L-methionine + 2 H(+). Its pathway is tRNA modification; tRNA-queuosine biosynthesis. Transfers and isomerizes the ribose moiety from AdoMet to the 7-aminomethyl group of 7-deazaguanine (preQ1-tRNA) to give epoxyqueuosine (oQ-tRNA). The sequence is that of S-adenosylmethionine:tRNA ribosyltransferase-isomerase from Herminiimonas arsenicoxydans.